A 265-amino-acid chain; its full sequence is Capsule polysaccharide export inner-membrane protein CtrC (265 aa).

6 consecutive transmembrane segments (helical) span residues 37 to 57 (IGFL…VLMW), 64 to 84 (NVSA…MMMW), 121 to 141 (IAGA…IGWI), 147 to 167 (IFYM…LGLV), 178 to 198 (FGKV…VFFF), and 236 to 256 (NPWY…AVVA). In terms of domain architecture, ABC transmembrane type-2 spans 37–258 (IGFLWLFVEP…LLGLAVVARF (222 aa)).

This sequence belongs to the ABC-2 integral membrane protein family.

The protein localises to the cell inner membrane. In terms of biological role, may form an ATP-driven capsule polysaccharide export apparatus, in association with the CtrB and CtrD proteins. The protein is Capsule polysaccharide export inner-membrane protein CtrC (ctrC) of Neisseria meningitidis serogroup A / serotype 4A (strain DSM 15465 / Z2491).